A 531-amino-acid chain; its full sequence is MAKYIFITGGVLSSLGKGITSASIASILEEMGYRVTLQKLDPYLNVDAGTMSPYQHGEVYVTEDGAETDLDLGHYERFTNAVMTRDNNVTAGRIYYNVISKERKGDYLGATVQVIPHITEEIKESIKRVEKDNDIVIVEIGGTVGDIEGLPFLEAVRQLSLELGRKNSMFIHLTYVPYIKAAGELKTKPTQHSVKELRAIGIQPDMIICRADRELPKGIKSKIALFTNVKEEAVISAPDLEFSYEVPLKLKEQGIDRIITERLNLEHREVNLGKWKKIVNVLRNPEEEVNVALVGKYVELKDSYKSVIEALIHGGIANKVKVNVILKNSEQLDISELQEDIHGIMVPGGFGERGIRGKIEALNFGRENNIPTFGICLGMQLMAIEFARNVLGFSNANSTEFDPDTPFPVIDIMEEQKKVDKLGGTMRLGAYPCKVKENTLAHRIYQKDLIYERHRHRYEFNNRYRKDFESKGVVFSGTSPDDKLVEIMELKNHMWYLGCQFHPEFKSKPFAPHPLFRDFIRACLEYKRKFT.

The segment at 1–265 is amidoligase domain; that stretch reads MAKYIFITGG…DRIITERLNL (265 aa). Position 13 (S13) interacts with CTP. A UTP-binding site is contributed by S13. Residue 14 to 19 coordinates ATP; sequence SLGKGI. Y54 is an L-glutamine binding site. An ATP-binding site is contributed by D71. The Mg(2+) site is built by D71 and E139. CTP is bound by residues 146 to 148, 186 to 191, and K222; these read DIE and KTKPTQ. UTP contacts are provided by residues 186 to 191 and K222; that span reads KTKPTQ. The Glutamine amidotransferase type-1 domain occupies 290-529; it reads NVALVGKYVE…IRACLEYKRK (240 aa). G349 contributes to the L-glutamine binding site. The active-site Nucleophile; for glutamine hydrolysis is C376. Residues 377–380, E400, and R457 each bind L-glutamine; that span reads LGMQ. Active-site residues include H502 and E504.

This sequence belongs to the CTP synthase family. In terms of assembly, homotetramer.

The catalysed reaction is UTP + L-glutamine + ATP + H2O = CTP + L-glutamate + ADP + phosphate + 2 H(+). The enzyme catalyses L-glutamine + H2O = L-glutamate + NH4(+). It catalyses the reaction UTP + NH4(+) + ATP = CTP + ADP + phosphate + 2 H(+). It participates in pyrimidine metabolism; CTP biosynthesis via de novo pathway; CTP from UDP: step 2/2. Its activity is regulated as follows. Allosterically activated by GTP, when glutamine is the substrate; GTP has no effect on the reaction when ammonia is the substrate. The allosteric effector GTP functions by stabilizing the protein conformation that binds the tetrahedral intermediate(s) formed during glutamine hydrolysis. Inhibited by the product CTP, via allosteric rather than competitive inhibition. In terms of biological role, catalyzes the ATP-dependent amination of UTP to CTP with either L-glutamine or ammonia as the source of nitrogen. Regulates intracellular CTP levels through interactions with the four ribonucleotide triphosphates. The chain is CTP synthase from Aquifex aeolicus (strain VF5).